Consider the following 391-residue polypeptide: Na(+)/H(+) antiporter NhaA (391 aa).

Transmembrane regions (helical) follow at residues 9–29, 36–56, 59–79, 95–115, 123–143, 154–174, 177–197, 213–235, 259–279, 293–313, 329–349, and 364–384; these read FQLEAASGLLLIAAAVLALII, YLYSGLLDVPVAVQIGALNIA, LLLWINDGLMALFFLLIGLEV, ILPATAAVGGMVVPALIYWFI, VAGWAIPTATDIAFALGVLAL, LFLMTLAIIDDLGAIIVIALF, GTLSSVSLLLAAACLVVLIAM, LILWVCVLKSGVHATLAGVALAL, WVAYAILPLFAFANAGVSLAG, IAVGLLLGKTVGVFGLTWLAV, ILGVAILCGIGFTMSLFVGSL, and MGILTGSFFAAVIGYAVTAMA.

Belongs to the NhaA Na(+)/H(+) (TC 2.A.33) antiporter family.

It is found in the cell inner membrane. The enzyme catalyses Na(+)(in) + 2 H(+)(out) = Na(+)(out) + 2 H(+)(in). Functionally, na(+)/H(+) antiporter that extrudes sodium in exchange for external protons. In Pseudomonas putida (strain GB-1), this protein is Na(+)/H(+) antiporter NhaA.